Here is a 254-residue protein sequence, read N- to C-terminus: Phosphoribosylaminoimidazole-succinocarboxamide synthase (254 aa).

This sequence belongs to the SAICAR synthetase family.

It catalyses the reaction 5-amino-1-(5-phospho-D-ribosyl)imidazole-4-carboxylate + L-aspartate + ATP = (2S)-2-[5-amino-1-(5-phospho-beta-D-ribosyl)imidazole-4-carboxamido]succinate + ADP + phosphate + 2 H(+). The protein operates within purine metabolism; IMP biosynthesis via de novo pathway; 5-amino-1-(5-phospho-D-ribosyl)imidazole-4-carboxamide from 5-amino-1-(5-phospho-D-ribosyl)imidazole-4-carboxylate: step 1/2. The polypeptide is Phosphoribosylaminoimidazole-succinocarboxamide synthase (Bartonella henselae (strain ATCC 49882 / DSM 28221 / CCUG 30454 / Houston 1) (Rochalimaea henselae)).